Reading from the N-terminus, the 109-residue chain is MAPLTAAEVSSLLAELGPHAETQEKKEALGVSAYRALFGAKPEYINLFSKLQGLTIDNVFIKYYGGTLVTTRNVNKQQFLSGEPIFVDFFKKMQKLLHHIFPIAGIHAL.

In terms of domain architecture, Globin spans 3–109; the sequence is PLTAAEVSSL…IFPIAGIHAL (107 aa).

The protein belongs to the globin family. In terms of assembly, monomer.

Functionally, oxygen binding protein. This is Globin from Dicrocoelium dendriticum (Small liver fluke).